Here is a 461-residue protein sequence, read N- to C-terminus: MALWGGRFSQGADSRFKQFNDSLRFDYRLAEQDIQGSMAWAKALVKVGVLTADEQGKLQQAMEVLLASVQQDPHQILNSDAEDIHSWVESQLIAAVGDLGKKLHTGRSRNDQVATDLKLWCKAQGELLLGSISALQAGLVASARANQAAVLPGYTHLQRAQPVTFAHWALAYVEMLERDYSRLQDALKRLDTSPLGCGALAGTAYAIDREALALDMGFGGATRNSLDSVSDRDHVVELMHVASLSMTHLSRFAEDLIFYNTGEAGFVELSDAVTSGSSLMPQKKNPDALELIRGKTGRVVGAQMGMLMSLKALPLAYNKDMQEDKEGLFDALDTWHDCLDMAALVLIDLKVNVERTKAAAQGGYANATELADYLVAKGIPFREAHHIVGETVVYALEVKKPLEDLSLPEFQRFSPVIGEDVYPNLELEATLAKRVAKGGVARELVDAALTAAEQWLAKWAG.

It belongs to the lyase 1 family. Argininosuccinate lyase subfamily.

It is found in the cytoplasm. It catalyses the reaction 2-(N(omega)-L-arginino)succinate = fumarate + L-arginine. The protein operates within amino-acid biosynthesis; L-arginine biosynthesis; L-arginine from L-ornithine and carbamoyl phosphate: step 3/3. The protein is Argininosuccinate lyase of Aeromonas salmonicida (strain A449).